Consider the following 169-residue polypeptide: Protein GrpE (169 aa).

The disordered stretch occupies residues 1–25; it reads MSEEKQNGQIQEETVENSENQNNEL. Over residues 7–23 the composition is skewed to polar residues; the sequence is NGQIQEETVENSENQNN.

Belongs to the GrpE family. In terms of assembly, homodimer.

It localises to the cytoplasm. In terms of biological role, participates actively in the response to hyperosmotic and heat shock by preventing the aggregation of stress-denatured proteins, in association with DnaK and GrpE. It is the nucleotide exchange factor for DnaK and may function as a thermosensor. Unfolded proteins bind initially to DnaJ; upon interaction with the DnaJ-bound protein, DnaK hydrolyzes its bound ATP, resulting in the formation of a stable complex. GrpE releases ADP from DnaK; ATP binding to DnaK triggers the release of the substrate protein, thus completing the reaction cycle. Several rounds of ATP-dependent interactions between DnaJ, DnaK and GrpE are required for fully efficient folding. This Campylobacter lari (strain RM2100 / D67 / ATCC BAA-1060) protein is Protein GrpE.